A 439-amino-acid chain; its full sequence is Type 3 secretion system ATPase (439 aa).

ATP is bound at residue 172-177; sequence GGGKST.

The protein belongs to the ATPase alpha/beta chains family. T3SS ATPase subfamily. In terms of assembly, the core secretion machinery of the T3SS is composed of approximately 20 different proteins, including cytoplasmic components, a base, an export apparatus and a needle. This subunit is part of the cytosolic complex. Forms homohexamers.

It localises to the cytoplasm. It catalyses the reaction ATP + H2O + cellular proteinSide 1 = ADP + phosphate + cellular proteinSide 2.. Its function is as follows. ATPase component of the type III secretion system (T3SS), also called injectisome, which is used to inject bacterial effector proteins into eukaryotic host cells. Acts as a molecular motor to provide the energy that is required for the export of proteins. Required for type III secretion apparatus (T3SA) formation, proper protein secretion, host cell invasion and virulence. May play a critical role in T3SS substrate recognition, disassembly of the effector/chaperone complex and unfolding of the effector in an ATP-dependent manner prior to secretion. This is Type 3 secretion system ATPase from Yersinia pseudotuberculosis serotype I (strain IP32953).